We begin with the raw amino-acid sequence, 256 residues long: DNA repair protein RecO (256 aa).

It belongs to the RecO family.

Involved in DNA repair and RecF pathway recombination. The polypeptide is DNA repair protein RecO (Streptococcus pneumoniae serotype 2 (strain D39 / NCTC 7466)).